The chain runs to 155 residues: Nascent polypeptide-associated complex subunit beta (155 aa).

Disordered stretches follow at residues 1–35 and 116–155; these read MDQA…SGAD and LAES…SNVE. A compositionally biased stretch (basic residues) spans 20-30; the sequence is TPRRKVKKVHK. Positions 33 to 98 constitute an NAC-A/B domain; sequence GADDKKLQAT…GEEKELTELV (66 aa). The segment covering 136 to 155 has biased composition (acidic residues); sequence DEEDDIPDLVEGENFESNVE.

This sequence belongs to the NAC-beta family. Part of the nascent polypeptide-associated complex (NAC), consisting of egd2 and egd1. NAC associates with ribosomes via egd1.

The protein resides in the cytoplasm. Its subcellular location is the nucleus. In terms of biological role, component of the nascent polypeptide-associated complex (NAC), a dynamic component of the ribosomal exit tunnel, protecting the emerging polypeptides from interaction with other cytoplasmic proteins to ensure appropriate nascent protein targeting. The NAC complex also promotes mitochondrial protein import by enhancing productive ribosome interactions with the outer mitochondrial membrane and blocks the inappropriate interaction of ribosomes translating non-secretory nascent polypeptides with translocation sites in the membrane of the endoplasmic reticulum. EGD1 may act as a transcription factor that exert a negative effect on the expression of several genes that are transcribed by RNA polymerase II. The chain is Nascent polypeptide-associated complex subunit beta (egd1) from Aspergillus niger (strain ATCC MYA-4892 / CBS 513.88 / FGSC A1513).